A 24-amino-acid polypeptide reads, in one-letter code: Lectin (24 aa).

Residues Ala-1–Leu-18 are compositionally biased toward polar residues. The tract at residues Ala-1–Ala-24 is disordered.

This sequence belongs to the leguminous lectin family. As to quaternary structure, homotetramer.

In Crotalaria juncea (Sunn hemp), this protein is Lectin.